The sequence spans 202 residues: MRLFVGLGNPGTKYQGNRHNIGFMVVDEIARRHGFAPWRRRFQGEASEGTLDRERVIVLKPATYMNNSGNAVQDAVQFFKLKEADVVVFHDEIELPPAKVRVKVGGGIAGHNGLRSISAHIGNDYRRVRLGVGHPGVKELVHAHVLNDFARSERSWVEALVDTVAENAALLVAAKDSAFQNKVHLAMQAKGFADNGGEDKQN.

TRNA is bound at residue tyrosine 14. The Proton acceptor role is filled by histidine 19. Positions 64, 66, and 112 each coordinate tRNA.

The protein belongs to the PTH family. Monomer.

The protein resides in the cytoplasm. It catalyses the reaction an N-acyl-L-alpha-aminoacyl-tRNA + H2O = an N-acyl-L-amino acid + a tRNA + H(+). Functionally, hydrolyzes ribosome-free peptidyl-tRNAs (with 1 or more amino acids incorporated), which drop off the ribosome during protein synthesis, or as a result of ribosome stalling. Its function is as follows. Catalyzes the release of premature peptidyl moieties from peptidyl-tRNA molecules trapped in stalled 50S ribosomal subunits, and thus maintains levels of free tRNAs and 50S ribosomes. This is Peptidyl-tRNA hydrolase from Nitrobacter winogradskyi (strain ATCC 25391 / DSM 10237 / CIP 104748 / NCIMB 11846 / Nb-255).